Consider the following 1384-residue polypeptide: DNA-directed RNA polymerase subunit beta (1384 aa).

Belongs to the RNA polymerase beta chain family. In terms of assembly, the RNAP catalytic core consists of 2 alpha, 1 beta, 1 beta' and 1 omega subunit. When a sigma factor is associated with the core the holoenzyme is formed, which can initiate transcription.

It catalyses the reaction RNA(n) + a ribonucleoside 5'-triphosphate = RNA(n+1) + diphosphate. Its function is as follows. DNA-dependent RNA polymerase catalyzes the transcription of DNA into RNA using the four ribonucleoside triphosphates as substrates. This chain is DNA-directed RNA polymerase subunit beta, found in Xylella fastidiosa (strain M12).